The following is a 258-amino-acid chain: Glycerol-3-phosphate acyltransferase (258 aa).

6 consecutive transmembrane segments (helical) span residues 11-31, 62-82, 94-114, 124-144, 160-180, and 212-232; these read IILASVIGYFLGSISWSIIIV, LVVAFLDALKVVFTAIVAILL, SYFIPCIFALIGHCYPIYYKF, LGLLFVVNVLYLIIFLIIWFI, ALIILLIMWIPYLSGVSYFIW, and WASGILEGNIIILIGGLILAW.

The protein belongs to the PlsY family. Probably interacts with PlsX.

Its subcellular location is the cell membrane. The enzyme catalyses an acyl phosphate + sn-glycerol 3-phosphate = a 1-acyl-sn-glycero-3-phosphate + phosphate. Its pathway is lipid metabolism; phospholipid metabolism. Its function is as follows. Catalyzes the transfer of an acyl group from acyl-phosphate (acyl-PO(4)) to glycerol-3-phosphate (G3P) to form lysophosphatidic acid (LPA). This enzyme utilizes acyl-phosphate as fatty acyl donor, but not acyl-CoA or acyl-ACP. The sequence is that of Glycerol-3-phosphate acyltransferase from Mycoplasma mycoides subsp. mycoides SC (strain CCUG 32753 / NCTC 10114 / PG1).